The primary structure comprises 127 residues: Glycine cleavage system H protein (127 aa).

The Lipoyl-binding domain maps to 24-105 (TALAGITDFA…YGEGWLVKIK (82 aa)). K65 carries the post-translational modification N6-lipoyllysine.

The protein belongs to the GcvH family. As to quaternary structure, the glycine cleavage system is composed of four proteins: P, T, L and H. Requires (R)-lipoate as cofactor.

Its function is as follows. The glycine cleavage system catalyzes the degradation of glycine. The H protein shuttles the methylamine group of glycine from the P protein to the T protein. In Chlorobium phaeobacteroides (strain DSM 266 / SMG 266 / 2430), this protein is Glycine cleavage system H protein.